A 528-amino-acid chain; its full sequence is GMP synthase [glutamine-hydrolyzing] (528 aa).

The 192-residue stretch at 13–204 (SILILDFGSQ…VYKISCCTAD (192 aa)) folds into the Glutamine amidotransferase type-1 domain. The active-site Nucleophile is the C90. Catalysis depends on residues H178 and E180. The GMPS ATP-PPase domain maps to 205-403 (WTTETYIEET…LGLPDEIIKR (199 aa)). 232–238 (SGGVDSS) serves as a coordination point for ATP.

In terms of assembly, homodimer.

The enzyme catalyses XMP + L-glutamine + ATP + H2O = GMP + L-glutamate + AMP + diphosphate + 2 H(+). It functions in the pathway purine metabolism; GMP biosynthesis; GMP from XMP (L-Gln route): step 1/1. In terms of biological role, catalyzes the synthesis of GMP from XMP. The chain is GMP synthase [glutamine-hydrolyzing] from Prochlorococcus marinus (strain AS9601).